Here is a 311-residue protein sequence, read N- to C-terminus: E3 ubiquitin-protein ligase RNF126 (311 aa).

Ala2 is modified (N-acetylalanine). A Phosphoserine modification is found at Ser5. The tract at residues 5-100 (SPHPGRYFCH…FEIPTFPPGA (96 aa)) is required for interaction with BAG6. 4 residues coordinate Zn(2+): Cys13, Cys16, Cys29, and Cys32. The C4-type zinc-finger motif lies at 13 to 32 (CHCCSVEIVPRLPDYICPRC). Disordered regions lie at residues 42–64 (EETR…SRPP) and 94–132 (PTFP…ARLT). Residues 47–61 (TENGSAPSTAPTDQS) show a composition bias toward polar residues. Basic and acidic residues predominate over residues 103–116 (DDGRDPESRRERDH). Positions 117–132 (PSRHRYGARQPRARLT) are enriched in basic residues. A sufficient for interaction with AICDA region spans residues 200-304 (TGPPPADKEK…SSSSSSSPSN (105 aa)). The segment at 229–270 (CPVCKDDYALGERVRQLPCNHLFHDGCIVPWLEQHDSCPVCR) adopts an RING-type zinc-finger fold. The disordered stretch occupies residues 277-311 (NTATNPPGLTGVSFSSSSSSSSSSSPSNENATSNS). Low complexity predominate over residues 289–311 (SFSSSSSSSSSSSPSNENATSNS).

As to quaternary structure, interacts with CCDC50, EGFR, FLT3 and SCAMP3. Interacts with BAG6 (via ubiquitin-like domain); required for BAG6-dependent ubiquitination of proteins mislocalized to the cytosol. Interacts with CDKN1A. Interacts with AICDA. Post-translationally, ubiquitinated. May undergo autoubiquitination. In terms of tissue distribution, highly expressed in liver and testis.

The protein resides in the cytoplasm. Its subcellular location is the nucleus. The catalysed reaction is S-ubiquitinyl-[E2 ubiquitin-conjugating enzyme]-L-cysteine + [acceptor protein]-L-lysine = [E2 ubiquitin-conjugating enzyme]-L-cysteine + N(6)-ubiquitinyl-[acceptor protein]-L-lysine.. Its pathway is protein modification; protein ubiquitination. E3 ubiquitin-protein ligase that mediates ubiquitination oF target proteins. Depending on the associated E2 ligase, mediates 'Lys-27'-, 'Lys-29'-, 'Lys-48'- and/or 'Lys-63'-linked polyubiquitination of substrates. Part of a BAG6-dependent quality control process ensuring that proteins of the secretory pathway that are mislocalized to the cytosol are degraded by the proteasome. Probably acts by providing the ubiquitin ligase activity associated with the BAG6 complex and be responsible for ubiquitination of the hydrophobic mislocalized proteins and their targeting to the proteasome. May also play a role in the endosomal recycling of IGF2R, the cation-independent mannose-6-phosphate receptor. May play a role in the endosomal sorting and degradation of several membrane receptors including EGFR, FLT3, MET and CXCR4, by mediating their ubiquitination. By ubiquitinating CDKN1A/p21 and targeting it for degradation, may also promote cell proliferation. May monoubiquitinate AICDA. Acts as a regulator of DNA repair by mediating 'Lys-27'- and 'Lys-29'-linked polyubiquitination of MRE11, thereby promoting the exonuclease activity of MRE11. In Homo sapiens (Human), this protein is E3 ubiquitin-protein ligase RNF126.